The sequence spans 393 residues: Formate-dependent phosphoribosylglycinamide formyltransferase (393 aa).

Residues 22–23 (EL) and Glu82 contribute to the N(1)-(5-phospho-beta-D-ribosyl)glycinamide site. ATP is bound by residues Arg114, Lys155, 160 to 165 (SSGKGQ), 195 to 198 (ESFV), and Glu203. The region spanning 119-308 (RLAAEEVGLK…EFALHVRAIL (190 aa)) is the ATP-grasp domain. Residues Glu267 and Glu279 each coordinate Mg(2+). Residues Asp286, Lys356, and 363-364 (RR) each bind N(1)-(5-phospho-beta-D-ribosyl)glycinamide.

Belongs to the PurK/PurT family. Homodimer.

It carries out the reaction N(1)-(5-phospho-beta-D-ribosyl)glycinamide + formate + ATP = N(2)-formyl-N(1)-(5-phospho-beta-D-ribosyl)glycinamide + ADP + phosphate + H(+). It participates in purine metabolism; IMP biosynthesis via de novo pathway; N(2)-formyl-N(1)-(5-phospho-D-ribosyl)glycinamide from N(1)-(5-phospho-D-ribosyl)glycinamide (formate route): step 1/1. Functionally, involved in the de novo purine biosynthesis. Catalyzes the transfer of formate to 5-phospho-ribosyl-glycinamide (GAR), producing 5-phospho-ribosyl-N-formylglycinamide (FGAR). Formate is provided by PurU via hydrolysis of 10-formyl-tetrahydrofolate. The sequence is that of Formate-dependent phosphoribosylglycinamide formyltransferase from Maridesulfovibrio salexigens (strain ATCC 14822 / DSM 2638 / NCIMB 8403 / VKM B-1763) (Desulfovibrio salexigens).